Consider the following 319-residue polypeptide: RWD domain-containing protein 2B (319 aa).

In terms of domain architecture, RWD spans Ala-41–Tyr-165. Ser-275 is subject to Phosphoserine.

In terms of tissue distribution, ubiquitous.

This is RWD domain-containing protein 2B (RWDD2B) from Homo sapiens (Human).